We begin with the raw amino-acid sequence, 329 residues long: Malate dehydrogenase (329 aa).

12-18 contacts NAD(+); the sequence is GAAGQIG. Substrate contacts are provided by R93 and R99. NAD(+) is bound by residues N106, Q113, and 130-132; that span reads TGN. Substrate contacts are provided by N132 and R163. Catalysis depends on H188, which acts as the Proton acceptor.

It belongs to the LDH/MDH superfamily. MDH type 2 family.

It catalyses the reaction (S)-malate + NAD(+) = oxaloacetate + NADH + H(+). Functionally, catalyzes the reversible oxidation of malate to oxaloacetate. The sequence is that of Malate dehydrogenase from Mycobacterium avium (strain 104).